The primary structure comprises 354 residues: Guanine nucleotide-binding protein G(o) subunit alpha (354 aa).

The N-myristoyl glycine moiety is linked to residue Gly-2. The S-palmitoyl cysteine moiety is linked to residue Cys-3. Residues 32–354 (KDVKLLLLGA…ANNLRGCGLY (323 aa)) form the G-alpha domain. The interval 35 to 48 (KLLLLGAGESGKST) is G1 motif. Glu-43, Lys-46, Ser-47, Thr-48, Ser-152, Leu-176, Arg-177, Thr-178, and Arg-179 together coordinate GTP. Position 47 (Ser-47) interacts with Mg(2+). Positions 174-182 (DILRTRVKT) are G2 motif. Position 182 (Thr-182) interacts with Mg(2+). The interval 197-206 (FRLFDVGGQR) is G3 motif. Gln-205 is subject to 5-glutamyl histamine. The interval 266-273 (ILFLNKKD) is G4 motif. 3 residues coordinate GTP: Asn-270, Asp-273, and Cys-325. The tract at residues 324–329 (TCATDT) is G5 motif. Cys-351 carries S-palmitoyl cysteine lipidation.

The protein belongs to the G-alpha family. G(i/o/t/z) subfamily. In terms of assembly, g proteins are composed of 3 units; alpha, beta and gamma. The alpha chain contains the guanine nucleotide binding site. Forms a complex with GNB1 and GNG3. Interacts with RGS14. Interacts with RGS16. Interacts with RGS19. Interacts (when palmitoylated) with ADGRG3. Post-translationally, histaminylated at Gln-205 residues by TGM2.

The protein localises to the cell membrane. The protein resides in the membrane. It catalyses the reaction GTP + H2O = GDP + phosphate + H(+). With respect to regulation, the GTPase activity is promoted by GTPAse activators, such as RGS14, RGS16 and RGS19. In terms of biological role, guanine nucleotide-binding proteins (G proteins) function as transducers downstream of G protein-coupled receptors (GPCRs) in numerous signaling cascades. The alpha chain contains the guanine nucleotide binding site and alternates between an active, GTP-bound state and an inactive, GDP-bound state. Signaling by an activated GPCR promotes GDP release and GTP binding. The alpha subunit has a low GTPase activity that converts bound GTP to GDP, thereby terminating the signal. Both GDP release and GTP hydrolysis are modulated by numerous regulatory proteins. Signaling is mediated via effector proteins, such as adenylate cyclase. Inhibits adenylate cyclase activity, leading to decreased intracellular cAMP levels. The polypeptide is Guanine nucleotide-binding protein G(o) subunit alpha (Gnao1) (Mus musculus (Mouse)).